We begin with the raw amino-acid sequence, 305 residues long: Porphobilinogen deaminase (305 aa).

An S-(dipyrrolylmethanemethyl)cysteine modification is found at C239.

The protein belongs to the HMBS family. As to quaternary structure, monomer. Requires dipyrromethane as cofactor.

The enzyme catalyses 4 porphobilinogen + H2O = hydroxymethylbilane + 4 NH4(+). It functions in the pathway porphyrin-containing compound metabolism; protoporphyrin-IX biosynthesis; coproporphyrinogen-III from 5-aminolevulinate: step 2/4. Tetrapolymerization of the monopyrrole PBG into the hydroxymethylbilane pre-uroporphyrinogen in several discrete steps. This is Porphobilinogen deaminase from Dichelobacter nodosus (strain VCS1703A).